The sequence spans 223 residues: 7-cyano-7-deazaguanine synthase (223 aa).

Residue 11–21 (ISGGMDSALAA) coordinates ATP. Residues Cys-189, Cys-197, Cys-200, and Cys-203 each coordinate Zn(2+).

It belongs to the QueC family. Zn(2+) serves as cofactor.

It catalyses the reaction 7-carboxy-7-deazaguanine + NH4(+) + ATP = 7-cyano-7-deazaguanine + ADP + phosphate + H2O + H(+). It functions in the pathway purine metabolism; 7-cyano-7-deazaguanine biosynthesis. Its function is as follows. Catalyzes the ATP-dependent conversion of 7-carboxy-7-deazaguanine (CDG) to 7-cyano-7-deazaguanine (preQ(0)). In Campylobacter fetus subsp. fetus (strain 82-40), this protein is 7-cyano-7-deazaguanine synthase.